The primary structure comprises 246 residues: Uridylate kinase (246 aa).

Position 11–14 (11–14 (KISG)) interacts with ATP. Residue Gly-53 coordinates UMP. Residues Gly-54 and Arg-58 each contribute to the ATP site. UMP is bound by residues Asp-74 and 135–142 (TGSPYLTT). ATP-binding residues include Thr-162, Tyr-169, and Asp-172.

Belongs to the UMP kinase family. Homohexamer.

The protein resides in the cytoplasm. It carries out the reaction UMP + ATP = UDP + ADP. It functions in the pathway pyrimidine metabolism; CTP biosynthesis via de novo pathway; UDP from UMP (UMPK route): step 1/1. With respect to regulation, inhibited by UTP. Functionally, catalyzes the reversible phosphorylation of UMP to UDP. This Chlamydia abortus (strain DSM 27085 / S26/3) (Chlamydophila abortus) protein is Uridylate kinase.